A 466-amino-acid chain; its full sequence is Asparagine--tRNA ligase (466 aa).

The protein belongs to the class-II aminoacyl-tRNA synthetase family. Homodimer.

The protein resides in the cytoplasm. The enzyme catalyses tRNA(Asn) + L-asparagine + ATP = L-asparaginyl-tRNA(Asn) + AMP + diphosphate + H(+). The protein is Asparagine--tRNA ligase of Photobacterium profundum (strain SS9).